Reading from the N-terminus, the 186-residue chain is DNA damage up-regulated protein (186 aa).

Residues 147-166 are disordered; sequence ATENGEGCRPARDPASSPSS.

In terms of assembly, interacts with DNA damage response proteins ATR, H2AX, PCNA, RAD18 and RAD51C. Forms a complex with H2AX and RAD18 following DDUP phosphorylation. In terms of processing, phosphorylated in an ATR-dependent manner; phosphorylation is required for interaction with H2AX and RAD18 and for DDUP-mediated DNA damage repair.

The protein resides in the nucleus. Its subcellular location is the chromosome. Functionally, promotes DNA damage repair through both homologous recombination repair (HRR) and post-replication repair (PRR) mechanisms. Enhances the retention of DNA damage response protein RAD18 at sites of DNA damage. This allows for HRR via association of RAD18 with RAD51C and for PRR via RAD18-mediated promotion of PCNA monoubiquitination. The sequence is that of DNA damage up-regulated protein from Homo sapiens (Human).